The sequence spans 360 residues: Peptide chain release factor 1 (360 aa).

Gln-237 is modified (N5-methylglutamine).

Belongs to the prokaryotic/mitochondrial release factor family. In terms of processing, methylated by PrmC. Methylation increases the termination efficiency of RF1.

Its subcellular location is the cytoplasm. Functionally, peptide chain release factor 1 directs the termination of translation in response to the peptide chain termination codons UAG and UAA. In Pseudomonas putida (strain ATCC 700007 / DSM 6899 / JCM 31910 / BCRC 17059 / LMG 24140 / F1), this protein is Peptide chain release factor 1.